We begin with the raw amino-acid sequence, 148 residues long: Transcriptional repressor NrdR (148 aa).

Residues 3-34 fold into a zinc finger; sequence CPFCHNEDTQVLDTRVSDEGDTIRRRRRCAKC. The ATP-cone domain occupies 49 to 139; it reads PAIVKKNGSR…VYRSFADIES (91 aa).

Belongs to the NrdR family. Zn(2+) is required as a cofactor.

Its function is as follows. Negatively regulates transcription of bacterial ribonucleotide reductase nrd genes and operons by binding to NrdR-boxes. In Polynucleobacter necessarius subsp. necessarius (strain STIR1), this protein is Transcriptional repressor NrdR.